The chain runs to 215 residues: Cytochrome b6 (215 aa).

The chain crosses the membrane as a helical span at residues 32-52 (IFYCIGGITFTCFLVQVATGF). Residue Cys35 coordinates heme c. Residues Gly37, Arg83, His86, His100, Arg103, and Arg114 each contribute to the heme b site. A helical membrane pass occupies residues 90–110 (ASMMVLMMVLHVFRVYLTGGF). The next 2 membrane-spanning stretches (helical) occupy residues 116-136 (LTWV…VTGY) and 186-206 (LHTF…FLMI). Heme b contacts are provided by His187 and His202. Residues Arg207 and Ile211 each coordinate heme c. Position 212 (Ser212) interacts with heme b.

This sequence belongs to the cytochrome b family. PetB subfamily. As to quaternary structure, the 4 large subunits of the cytochrome b6-f complex are cytochrome b6, subunit IV (17 kDa polypeptide, PetD), cytochrome f and the Rieske protein, while the 4 small subunits are PetG, PetL, PetM and PetN. The complex functions as a dimer. The cofactor is heme b. Requires heme c as cofactor. In terms of processing, the N-terminus is blocked.

The protein localises to the plastid. It is found in the chloroplast thylakoid membrane. Component of the cytochrome b6-f complex, which mediates electron transfer between photosystem II (PSII) and photosystem I (PSI), cyclic electron flow around PSI, and state transitions. This is Cytochrome b6 from Chlamydomonas reinhardtii (Chlamydomonas smithii).